We begin with the raw amino-acid sequence, 203 residues long: Gramillins biosynthetic cluster protein FGSG_00038 (203 aa).

It functions in the pathway mycotoxin biosynthesis. Part of the gene cluster that mediates the biosynthesis of gramillins A and B, bicyclic lipopeptides that induce cell death in maize leaves but not in wheat leaves. The nonribosomal peptide synthetase GRA1 incorporates respectively a glutamic adic (Glu), a leucine (Leu), a serine (Ser), a hydroxyglutamine (HOGln), a 2-amino decanoic acid, and 2 cysteins (CysB and CysA). The biosynthesis of 2-amino decanoic acid incorporated in gramillins could be initiated by a fatty acid synthase composed of the alpha and beta subunits FGSG_00036 and FGSG_11656. The cytochrome P450 monooxygenase FGSG_15680 could hydroxylate the fatty acid chain. Subsequent oxidation to the ketone by the oxidoreductase FGSG_00048 and transamination by aminotransferase FGSG_00049 could form 2-amino-decanoic acid. On the other hand, FGSG_15680 could also be responsible for the HO-modified glutamine at the gamma-position. Whether hydroxylation occurs on the fully assembled product or on the Gln residue prior to assembly into the gramillins requires further proof. The thioredoxin FGSG_00043 could also be required for the disulfide-bond formation between CysA and CysB. The specific involvement of the remaining proteins from the cluster is more difficult to discern, but could have broader regulatory (FGSG_00040 and FGSG_11657) or enzymatic functions (FGSG_00044 and FGSG_00045). The final C-domain of GRA1 does not possess the expected sequence of a termination CT domain, often implicated in macrocyclization and release of a cyclopeptidein fungal NRPs; and the thioesterase FGSG_00047 may act in concert with the terminal C-domain of GRA1 to catalyze the formation of the macrocyclic anhydride and release of the products. This is Gramillins biosynthetic cluster protein FGSG_00038 from Gibberella zeae (strain ATCC MYA-4620 / CBS 123657 / FGSC 9075 / NRRL 31084 / PH-1) (Wheat head blight fungus).